A 102-amino-acid polypeptide reads, in one-letter code: NADH-quinone oxidoreductase subunit K (102 aa).

The next 3 membrane-spanning stretches (helical) occupy residues 6–26, 30–50, and 65–85; these read MEHG…GLLI, LLYI…AFVV, and ILVI…LLLL.

Belongs to the complex I subunit 4L family. In terms of assembly, NDH-1 is composed of 13 different subunits. Subunits NuoA, H, J, K, L, M, N constitute the membrane sector of the complex.

The protein resides in the cell inner membrane. It catalyses the reaction a quinone + NADH + 5 H(+)(in) = a quinol + NAD(+) + 4 H(+)(out). Functionally, NDH-1 shuttles electrons from NADH, via FMN and iron-sulfur (Fe-S) centers, to quinones in the respiratory chain. The immediate electron acceptor for the enzyme in this species is believed to be ubiquinone. Couples the redox reaction to proton translocation (for every two electrons transferred, four hydrogen ions are translocated across the cytoplasmic membrane), and thus conserves the redox energy in a proton gradient. This is NADH-quinone oxidoreductase subunit K from Shewanella oneidensis (strain ATCC 700550 / JCM 31522 / CIP 106686 / LMG 19005 / NCIMB 14063 / MR-1).